The primary structure comprises 290 residues: Enoyl-CoA hydratase, mitochondrial (290 aa).

The transit peptide at 1 to 27 (MATLRVLLSCVRGPLRPPVRCPAWRPF) directs the protein to the mitochondrion. Thr-46 carries the post-translational modification Phosphothreonine. 98 to 101 (ADIK) is a substrate binding site. Lys-101 carries the N6-acetyllysine; alternate modification. Lys-101 bears the N6-succinyllysine; alternate mark. Ser-114 bears the Phosphoserine mark. N6-acetyllysine; alternate is present on Lys-115. Lys-115 carries the N6-succinyllysine; alternate modification. The residue at position 118 (Lys-118) is an N6-acetyllysine. Residue Gly-141 coordinates substrate. Lys-204 carries the post-translational modification N6-succinyllysine. At Lys-211 the chain carries N6-acetyllysine.

It belongs to the enoyl-CoA hydratase/isomerase family. As to quaternary structure, homohexamer; dimer of trimers.

Its subcellular location is the mitochondrion matrix. The catalysed reaction is a (3S)-3-hydroxyacyl-CoA = a (2E)-enoyl-CoA + H2O. The enzyme catalyses a (3E)-enoyl-CoA = a 4-saturated (2E)-enoyl-CoA. It catalyses the reaction (3E)-hexenoyl-CoA = (2E)-hexenoyl-CoA. It carries out the reaction (3S)-3-hydroxybutanoyl-CoA = (2E)-butenoyl-CoA + H2O. The catalysed reaction is 3-hydroxyisovaleryl-CoA = 3-methylbut-2-enoyl-CoA + H2O. The enzyme catalyses 3-hydroxypropanoyl-CoA = acryloyl-CoA + H2O. It catalyses the reaction 3-hydroxybutanoyl-CoA = (2E)-butenoyl-CoA + H2O. It carries out the reaction 2-methylpropenoyl-CoA + H2O = (S)-3-hydroxyisobutanoyl-CoA. The catalysed reaction is (3S)-hydroxyhexanoyl-CoA = (2E)-hexenoyl-CoA + H2O. The enzyme catalyses (3S)-hydroxydecanoyl-CoA = (2E)-decenoyl-CoA + H2O. It functions in the pathway lipid metabolism; fatty acid beta-oxidation. Converts unsaturated trans-2-enoyl-CoA species ((2E)-enoyl-CoA) to the corresponding (3S)-3-hydroxyacyl-CoA species through addition of a water molecule to the double bond. Catalyzes the hydration of medium- and short-chained fatty enoyl-CoA thioesters from 4 carbons long (C4) up to C16. Has high substrate specificity for crotonyl-CoA ((2E)-butenoyl-CoA) and moderate specificity for acryloyl-CoA, 3-methylcrotonyl-CoA (3-methyl-(2E)-butenoyl-CoA) and methacrylyl-CoA ((2E)-2-methylpropenoyl-CoA). Can bind tiglyl-CoA (2-methylcrotonoyl-CoA), but hydrates only a small amount of this substrate. Plays a key role in the beta-oxidation spiral of short- and medium-chain fatty acid oxidation. At a lower rate than the hydratase reaction, catalyzes the isomerase reaction of trans-3-enoyl-CoA species (such as (3E)-hexenoyl-CoA) to trans-2-enoyl-CoA species (such as (2E)-hexenoyl-CoA), which are subsequently hydrated to 3(S)-3-hydroxyacyl-CoA species (such as (3S)-hydroxyhexanoyl-CoA). The protein is Enoyl-CoA hydratase, mitochondrial (ECHS1) of Pongo abelii (Sumatran orangutan).